Consider the following 309-residue polypeptide: Mitochondrial substrate carrier family protein ancA (309 aa).

3 Solcar repeats span residues 10-102 (SSFV…YKKF), 114-203 (KFFI…AKGI), and 216-299 (ASWG…IQKL). Transmembrane regions (helical) follow at residues 12 to 41 (FVKDSLIGGTAGGVSKTIVAPIERVKLLLQ), 79 to 103 (LANVIRYFPTQALNFAFKDKYKKFF), 113 to 133 (TKFFIGNLLSGGAAGATSLLF), 181 to 201 (VSVGGIFVYRAAFFGGYDTAK), and 215 to 235 (WASWGIAQVVTTIAGVVSYPF). Residues R84 and K96 each coordinate ADP. An ADP-binding site is contributed by R239. An important for transport activity region spans residues 239 to 244 (RRRMMM). The short motif at 239-244 (RRRMMM) is the Nucleotide carrier signature motif element. Residues 276–293 (ALSNAIRGSGGALVLVIY) traverse the membrane as a helical segment.

The protein belongs to the mitochondrial carrier (TC 2.A.29) family. In terms of assembly, monomer.

The protein localises to the mitochondrion inner membrane. The enzyme catalyses ADP(in) + ATP(out) = ADP(out) + ATP(in). The matrix-open state (m-state) is inhibited by the membrane-permeable bongkrekic acid (BKA). The cytoplasmic-open state (c-state) is inhibited by the membrane-impermeable toxic inhibitor carboxyatractyloside (CATR). Functionally, ADP:ATP antiporter that mediates import of ADP into the mitochondrial matrix for ATP synthesis, and export of ATP out to fuel the cell. Cycles between the cytoplasmic-open state (c-state) and the matrix-open state (m-state): operates by the alternating access mechanism with a single substrate-binding site intermittently exposed to either the cytosolic (c-state) or matrix (m-state) side of the inner mitochondrial membrane. This Dictyostelium discoideum (Social amoeba) protein is Mitochondrial substrate carrier family protein ancA (ancA).